A 436-amino-acid chain; its full sequence is 3-ketoacyl-CoA thiolase (436 aa).

Cys99 acts as the Acyl-thioester intermediate in catalysis. Residues His392 and Cys422 each act as proton acceptor in the active site.

It belongs to the thiolase-like superfamily. Thiolase family. Heterotetramer of two alpha chains (FadJ) and two beta chains (FadI).

Its subcellular location is the cytoplasm. The enzyme catalyses an acyl-CoA + acetyl-CoA = a 3-oxoacyl-CoA + CoA. It functions in the pathway lipid metabolism; fatty acid beta-oxidation. In terms of biological role, catalyzes the final step of fatty acid oxidation in which acetyl-CoA is released and the CoA ester of a fatty acid two carbons shorter is formed. This Shigella flexneri serotype 5b (strain 8401) protein is 3-ketoacyl-CoA thiolase.